The following is an 89-amino-acid chain: Small ribosomal subunit protein uS15 (89 aa).

Belongs to the universal ribosomal protein uS15 family. In terms of assembly, part of the 30S ribosomal subunit. Forms a bridge to the 50S subunit in the 70S ribosome, contacting the 23S rRNA.

In terms of biological role, one of the primary rRNA binding proteins, it binds directly to 16S rRNA where it helps nucleate assembly of the platform of the 30S subunit by binding and bridging several RNA helices of the 16S rRNA. Functionally, forms an intersubunit bridge (bridge B4) with the 23S rRNA of the 50S subunit in the ribosome. The sequence is that of Small ribosomal subunit protein uS15 from Agrobacterium fabrum (strain C58 / ATCC 33970) (Agrobacterium tumefaciens (strain C58)).